The chain runs to 315 residues: Replication factor C small subunit (315 aa).

43 to 50 serves as a coordination point for ATP; sequence GSPGVGKT.

Belongs to the activator 1 small subunits family. RfcS subfamily. As to quaternary structure, heteromultimer composed of small subunits (RfcS) and large subunits (RfcL).

In terms of biological role, part of the RFC clamp loader complex which loads the PCNA sliding clamp onto DNA. This is Replication factor C small subunit from Methanococcus maripaludis (strain C5 / ATCC BAA-1333).